A 549-amino-acid chain; its full sequence is Chaperonin GroEL (549 aa).

ATP is bound by residues 30-33 (TLGP), K51, 87-91 (DGTTT), G415, 479-481 (NAA), and D495.

Belongs to the chaperonin (HSP60) family. Forms a cylinder of 14 subunits composed of two heptameric rings stacked back-to-back. Interacts with the co-chaperonin GroES.

Its subcellular location is the cytoplasm. It catalyses the reaction ATP + H2O + a folded polypeptide = ADP + phosphate + an unfolded polypeptide.. In terms of biological role, together with its co-chaperonin GroES, plays an essential role in assisting protein folding. The GroEL-GroES system forms a nano-cage that allows encapsulation of the non-native substrate proteins and provides a physical environment optimized to promote and accelerate protein folding. The protein is Chaperonin GroEL of Stenotrophomonas maltophilia (strain R551-3).